The chain runs to 301 residues: ATP synthase gamma chain (301 aa).

It belongs to the ATPase gamma chain family. As to quaternary structure, F-type ATPases have 2 components, CF(1) - the catalytic core - and CF(0) - the membrane proton channel. CF(1) has five subunits: alpha(3), beta(3), gamma(1), delta(1), epsilon(1). CF(0) has three main subunits: a, b and c.

The protein resides in the cell inner membrane. In terms of biological role, produces ATP from ADP in the presence of a proton gradient across the membrane. The gamma chain is believed to be important in regulating ATPase activity and the flow of protons through the CF(0) complex. This is ATP synthase gamma chain from Bordetella parapertussis (strain 12822 / ATCC BAA-587 / NCTC 13253).